Consider the following 112-residue polypeptide: MCRCRCMAMMSFVAIVTPLTMLTGLIDWKYRYDMRKVPIIQRKVITGIVGYVFVVVYVVLHSLTDYSLAALAMALVFFAITGEYGGKLVHGARTLLCLKNLRKGSSQKSNPN.

2 helical membrane-spanning segments follow: residues 44–63 and 68–90; these read VITGIVGYVFVVVYVVLHSL and LAALAMALVFFAITGEYGGKLVH.

It localises to the cell membrane. This is an uncharacterized protein from Archaeoglobus fulgidus (strain ATCC 49558 / DSM 4304 / JCM 9628 / NBRC 100126 / VC-16).